The primary structure comprises 37 residues: MKVRASVRKICEHCRLIRRRRKVMIICFNPKHKQRQG.

The protein belongs to the bacterial ribosomal protein bL36 family.

It localises to the plastid. The protein resides in the chloroplast. This chain is Large ribosomal subunit protein bL36c, found in Chara vulgaris (Common stonewort).